The chain runs to 1550 residues: Adhesion G protein-coupled receptor L3 (1550 aa).

A signal peptide spans 1-19; that stretch reads MCPPQLFILMMLLAPVVHG. The Extracellular segment spans residues 20–948; it reads GKHNERHPAL…VHDLLLDVIT (929 aa). The tract at residues 34–80 is disordered; the sequence is RHAEHSPGGPLPPRHLLQQPAAERSTAHRGQGPRGTARGVRGPGAPG. An SUEL-type lectin domain is found at 103 to 192; it reads SCESYPIELR…KYLEVQYECV (90 aa). 5 cysteine pairs are disulfide-bonded: Cys104–Cys134, Cys113–Cys191, Cys146–Cys178, Cys159–Cys165, and Cys203–Cys385. An N-linked (GlcNAc...) asparagine glycan is attached at Asn161. The 260-residue stretch at 202–461 folds into the Olfactomedin-like domain; that stretch reads LCPGLLKGVY…VVKYSLDFGP (260 aa). The segment at 317 to 347 is interaction with FLRT3; sequence YHDTSPYRWGGKSDIDLAVDENGLWVIYATE. Positions 332, 380, 381, and 435 each coordinate Ca(2+). The segment at 518–538 is disordered; it reads NLGRSTTPSLPGRRNRSTSTP. Residues Asn532, Asn616, Asn839, Asn884, and Asn910 are each glycosylated (N-linked (GlcNAc...) asparagine). The GAIN-B domain maps to 755–934; sequence DIVRENTDNI…AVLMAHVEVK (180 aa). 2 cysteine pairs are disulfide-bonded: Cys885/Cys916 and Cys904/Cys918. The GPS stretch occupies residues 885–934; that stretch reads CSFWSYSKRTMTGYWSTQGCRLLTTNKTHTTCSCNHLTNFAVLMAHVEVK. A stachel region spans residues 922–938; it reads TNFAVLMAHVEVKHSDA. Residues 949 to 969 form a helical membrane-spanning segment; that stretch reads WVGILLSLVCLLICIFTFCFF. Topologically, residues 970–977 are cytoplasmic; it reads RGLQSDRN. A helical membrane pass occupies residues 978 to 998; that stretch reads TIHKNLCISLFVAELLFLIGI. Asn999 is a glycosylation site (N-linked (GlcNAc...) asparagine). The Extracellular portion of the chain corresponds to 999–1006; the sequence is NRTDQPIA. A helical transmembrane segment spans residues 1007-1027; the sequence is CAVFAALLHFFFLAAFTWMFL. Residues 1028–1048 lie on the Cytoplasmic side of the membrane; the sequence is EGVQLYIMLVEVFESEHSRRK. The chain crosses the membrane as a helical span at residues 1049–1069; that stretch reads YFYLVGYGMPALIVAVSAAVD. The Extracellular segment spans residues 1070–1087; the sequence is YRSYGTDKVCWLRLDTYF. A helical transmembrane segment spans residues 1088–1108; that stretch reads IWSFIGPATLIIMLNVIFLGI. At 1109 to 1141 the chain is on the cytoplasmic side; the sequence is ALYKMFHHTAILKPESGCLDNINYEDNRPFIKS. The chain crosses the membrane as a helical span at residues 1142–1162; sequence WVIGAIALLCLLGLTWAFGLM. The Extracellular segment spans residues 1163-1168; sequence YINEST. Residue Asn1165 is glycosylated (N-linked (GlcNAc...) asparagine). The helical transmembrane segment at 1169–1189 threads the bilayer; that stretch reads VIMAYLFTIFNSLQGMFIFIF. Residues 1190 to 1550 are Cytoplasmic-facing; that stretch reads HCVLQKKVRK…KGPAHLVTSL (361 aa). Positions 1213-1236 are disordered; sequence KSTESSIGSGKTSGSRTPGRYSTG. Ser1253 carries the phosphoserine modification. Disordered regions lie at residues 1410–1435 and 1528–1550; these read LLPPRVYSTDNHQPHHYSRRRLPQDH and PPNKDGASPEGTSKGPAHLVTSL. Phosphoserine is present on Ser1535. Positions 1545–1550 match the PDZ-binding motif; sequence HLVTSL.

The protein belongs to the G-protein coupled receptor 2 family. LN-TM7 subfamily. As to quaternary structure, heterodimer of 2 chains generated by proteolytic processing; the large extracellular N-terminal fragment and the membrane-bound C-terminal fragment predominantly remain associated and non-covalently linked. Interacts (via olfactomedin-like domain) with FLRT1 (via extracellular domain). Interacts (via olfactomedin-like domain) with FLRT2 (via extracellular domain). Interacts (via olfactomedin-like domain) with FLRT3 (via extracellular domain); the interaction is direct. Interacts (via extracellular domain) with TENM1. Interacts (via extracellular domain) with TENM2. Interacts (via extracellular domain) with TENM3. Identified in a complex with FLRT3 and UNC5B; does not interact with UNC5B by itself. Identified in a complex with FLRT3 and UNC5D; does not interact with UNC5D by itself. Interacts (via PDZ-binding motif) with SHANK3. Interacts (via PDZ-binding motif) with DLG4. Autoproteolytically processed at the GPS region of the GAIN-B domain; this cleavage modulates receptor activity. Predominantly expressed in brain, followed by heart, placenta, pancreas, kidney and testis.

The protein localises to the cell membrane. It localises to the postsynaptic cell membrane. Its subcellular location is the cell projection. The protein resides in the axon. It is found in the cell junction. Forms a heterodimer of 2 chains generated by proteolytic processing that remain associated through non-covalent interactions mediated by the GAIN-B domain. In the inactivated receptor, the Stachel sequence (also named stalk) is embedded in the GAIN-B domain, where it adopts a beta-strand conformation. On activation, the Stachel moves into the 7 transmembrane region and adopts a twisted hook-shaped configuration that forms contacts within the receptor, leading to coupling of a G-alpha protein, which activates signaling. The cleaved GAIN-B and N-terminal domains can then dissociate from the rest of the receptor. Functionally, orphan adhesion G-protein coupled receptor (aGPCR), which mediates synapse specificity. Ligand binding causes a conformation change that triggers signaling via guanine nucleotide-binding proteins (G proteins) and modulates the activity of downstream effectors. ADGRL3 is coupled with different classes of G alpha proteins, such as G(12)/G(13), G(s), G(i) or G(q), depending on the context. Coupling to G(12)/G(13) G proteins, which mediates the activation Rho small GTPases is the most efficient. Following G-protein coupled receptor activation, associates with cell adhesion molecules that are expressed at the surface of adjacent cells to direct synapse specificity. Specifically mediates the establishment of Schaffer-collateral synapses formed by CA3-region axons on CA1-region pyramidal neurons in the hippocampus. Localizes to postsynaptic spines in excitatory synapses in the S.oriens and S.radiatum and interacts with presynaptic cell adhesion molecules FLRT3 and TENM2, promoting synapse formation. Plays a role in the development of glutamatergic synapses in the cortex. Important in determining the connectivity rates between the principal neurons in the cortex. Its function is as follows. Orphan adhesion G-protein coupled receptor (aGPCR), which mediates synapse specificity. Ligand binding causes a conformation change that triggers signaling via guanine nucleotide-binding proteins (G proteins) and modulates the activity of downstream effectors, such as adenylate cyclase. Isoform 1 is specifically coupled to G(s) G proteins and mediates activation of adenylate cyclase activity. Following G-protein coupled receptor activation, undergoes liquid-liquid phase transition, associates with (1) cell adhesion molecules that are expressed at the surface of adjacent cells, as well as (2) PDZ-containing proteins, such as SHANK3 and DLG4, in the cytoplasm to direct synapse formation. The polypeptide is Adhesion G protein-coupled receptor L3 (Rattus norvegicus (Rat)).